Here is a 210-residue protein sequence, read N- to C-terminus: Hypoxanthine-guanine phosphoribosyltransferase (210 aa).

Residues Lys54, 113–121 (EDILDTALT), Lys145, and Asp173 each bind GMP. Residue Asp117 is the Proton acceptor of the active site. Mg(2+) is bound at residue Asp173.

This sequence belongs to the purine/pyrimidine phosphoribosyltransferase family. Mg(2+) serves as cofactor.

It localises to the cytoplasm. The catalysed reaction is IMP + diphosphate = hypoxanthine + 5-phospho-alpha-D-ribose 1-diphosphate. The enzyme catalyses GMP + diphosphate = guanine + 5-phospho-alpha-D-ribose 1-diphosphate. The protein operates within purine metabolism; IMP biosynthesis via salvage pathway; IMP from hypoxanthine: step 1/1. Its function is as follows. Converts guanine to guanosine monophosphate, and hypoxanthine to inosine monophosphate. Transfers the 5-phosphoribosyl group from 5-phosphoribosylpyrophosphate onto the purine. Plays a central role in the generation of purine nucleotides through the purine salvage pathway. The polypeptide is Hypoxanthine-guanine phosphoribosyltransferase (HGPRT) (Trypanosoma brucei brucei).